Consider the following 170-residue polypeptide: Photosystem I assembly protein Ycf3 (170 aa).

TPR repeat units lie at residues 35-68, 72-105, and 120-153; these read AFTY…EIDP, SYIL…NPFL, and GEQA…TPGN.

This sequence belongs to the Ycf3 family.

It localises to the plastid. Its subcellular location is the chloroplast thylakoid membrane. Its function is as follows. Essential for the assembly of the photosystem I (PSI) complex. May act as a chaperone-like factor to guide the assembly of the PSI subunits. This chain is Photosystem I assembly protein Ycf3, found in Zea mays (Maize).